The following is a 188-amino-acid chain: Peptidyl-tRNA hydrolase (188 aa).

F14 is a binding site for tRNA. Catalysis depends on H19, which acts as the Proton acceptor. Residues Y64, N66, and N112 each coordinate tRNA.

The protein belongs to the PTH family. In terms of assembly, monomer.

It is found in the cytoplasm. The enzyme catalyses an N-acyl-L-alpha-aminoacyl-tRNA + H2O = an N-acyl-L-amino acid + a tRNA + H(+). Hydrolyzes ribosome-free peptidyl-tRNAs (with 1 or more amino acids incorporated), which drop off the ribosome during protein synthesis, or as a result of ribosome stalling. Functionally, catalyzes the release of premature peptidyl moieties from peptidyl-tRNA molecules trapped in stalled 50S ribosomal subunits, and thus maintains levels of free tRNAs and 50S ribosomes. The protein is Peptidyl-tRNA hydrolase of Onion yellows phytoplasma (strain OY-M).